The sequence spans 210 residues: Cell wall protein SRL1 (210 aa).

An N-terminal signal peptide occupies residues 1–19 (MLQSVVFFALLTFASSVSA). Asn23 carries an N-linked (GlcNAc...) asparagine glycan. 2 disordered regions span residues 80 to 99 (SLSTSSASGSVTPESTHEIT) and 118 to 142 (LSPSSTAASVSDEDSNNKDAKVKSF). Low complexity predominate over residues 118-127 (LSPSSTAASV). Over residues 132–141 (SNNKDAKVKS) the composition is skewed to basic and acidic residues. N-linked (GlcNAc...) asparagine glycans are attached at residues Asn174, Asn200, and Asn206.

Its subcellular location is the secreted. The protein localises to the cell wall. It is found in the cell surface. Required to stabilize the cell wall in the absence of multiple GPI-anchored mannoproteins. This is Cell wall protein SRL1 (SRL1) from Saccharomyces cerevisiae (strain ATCC 204508 / S288c) (Baker's yeast).